Here is a 97-residue protein sequence, read N- to C-terminus: Co-chaperonin GroES (97 aa).

Belongs to the GroES chaperonin family. In terms of assembly, heptamer of 7 subunits arranged in a ring. Interacts with the chaperonin GroEL.

It is found in the cytoplasm. Together with the chaperonin GroEL, plays an essential role in assisting protein folding. The GroEL-GroES system forms a nano-cage that allows encapsulation of the non-native substrate proteins and provides a physical environment optimized to promote and accelerate protein folding. GroES binds to the apical surface of the GroEL ring, thereby capping the opening of the GroEL channel. This chain is Co-chaperonin GroES, found in Klebsiella pneumoniae (strain 342).